Consider the following 381-residue polypeptide: Diguanylate cyclase DosC (381 aa).

Histidine 98 lines the heme pocket. One can recognise a GGDEF domain in the interval 325–381 (TPLSVLIIDVDKFKEINDTWGHNTGDEILRKVSFLSQKRLVKSKILGAGSSRKLAVS). Aspartate 333 contacts Mg(2+). The substrate site is built by asparagine 341 and aspartate 350.

The cofactor is heme. Mg(2+) is required as a cofactor.

It catalyses the reaction 2 GTP = 3',3'-c-di-GMP + 2 diphosphate. It functions in the pathway purine metabolism; 3',5'-cyclic di-GMP biosynthesis. In terms of biological role, globin-coupled heme-based oxygen sensor protein displaying diguanylate cyclase (DGC) activity in response to oxygen availability. Thus, catalyzes the synthesis of cyclic diguanylate (c-di-GMP) via the condensation of 2 GTP molecules. Cyclic-di-GMP is a second messenger which controls cell surface-associated traits in bacteria. The protein is Diguanylate cyclase DosC (dosC) of Shigella flexneri serotype 5b (strain 8401).